The sequence spans 161 residues: Small ribosomal subunit protein bS6 (161 aa).

The tract at residues 107-161 is disordered; that stretch reads KGDERERGFRGPKPAGRFESGRGGAGGARRGYDDREEFRARNEREDGRDTDGEAE. Basic and acidic residues predominate over residues 136-161; it reads RGYDDREEFRARNEREDGRDTDGEAE.

The protein belongs to the bacterial ribosomal protein bS6 family.

Functionally, binds together with bS18 to 16S ribosomal RNA. This is Small ribosomal subunit protein bS6 from Gluconacetobacter diazotrophicus (strain ATCC 49037 / DSM 5601 / CCUG 37298 / CIP 103539 / LMG 7603 / PAl5).